A 232-amino-acid polypeptide reads, in one-letter code: Probable GTP-binding protein EngB (232 aa).

The EngB-type G domain maps to 13-188; it reads IGLEVAFAGR…AGVMGNWYEY (176 aa). Residues 21 to 28, 48 to 52, 67 to 70, 134 to 137, and 167 to 169 each bind GTP; these read GRSNAGKS, GRTQM, DLPG, TKAD, and FSA. Mg(2+) contacts are provided by S28 and T50.

This sequence belongs to the TRAFAC class TrmE-Era-EngA-EngB-Septin-like GTPase superfamily. EngB GTPase family. Mg(2+) is required as a cofactor.

Necessary for normal cell division and for the maintenance of normal septation. The chain is Probable GTP-binding protein EngB from Psychrobacter arcticus (strain DSM 17307 / VKM B-2377 / 273-4).